Here is a 548-residue protein sequence, read N- to C-terminus: Lipase 2 (548 aa).

The N-terminal stretch at M1–A14 is a signal peptide. Residues C74 and C111 are joined by a disulfide bond. S223 functions as the Acyl-ester intermediate in the catalytic mechanism. Residues C282 and C291 are joined by a disulfide bond. Catalysis depends on E355, which acts as the Charge relay system. N-linked (GlcNAc...) asparagine glycosylation is present at N365. H463 serves as the catalytic Charge relay system.

Belongs to the type-B carboxylesterase/lipase family.

The catalysed reaction is a triacylglycerol + H2O = a diacylglycerol + a fatty acid + H(+). The sequence is that of Lipase 2 (LIP2) from Diutina rugosa (Yeast).